Consider the following 276-residue polypeptide: UPF0276 protein AM1_3026 (276 aa).

The protein belongs to the UPF0276 family.

The chain is UPF0276 protein AM1_3026 from Acaryochloris marina (strain MBIC 11017).